The following is a 78-amino-acid chain: Large ribosomal subunit protein bL28 (78 aa).

Positions 1-22 (MAKVCQVTGKRPVTGHNVSHAK) are disordered.

It belongs to the bacterial ribosomal protein bL28 family.

The chain is Large ribosomal subunit protein bL28 from Teredinibacter turnerae (strain ATCC 39867 / T7901).